The chain runs to 96 residues: HssA/B-like protein 25 (96 aa).

It belongs to the hssA/B family.

The protein is HssA/B-like protein 25 (hssl25) of Dictyostelium discoideum (Social amoeba).